The chain runs to 362 residues: Probable dual-specificity RNA methyltransferase RlmN (362 aa).

Catalysis depends on E105, which acts as the Proton acceptor. In terms of domain architecture, Radical SAM core spans 111–344 (HEYGNSICVT…VTIRREQGHD (234 aa)). A disulfide bridge links C118 with C349. The [4Fe-4S] cluster site is built by C125, C129, and C132. Residues 175-176 (GE), S207, 230-232 (SLH), and N306 each bind S-adenosyl-L-methionine. C349 (S-methylcysteine intermediate) is an active-site residue.

This sequence belongs to the radical SAM superfamily. RlmN family. [4Fe-4S] cluster is required as a cofactor.

The protein localises to the cytoplasm. It carries out the reaction adenosine(2503) in 23S rRNA + 2 reduced [2Fe-2S]-[ferredoxin] + 2 S-adenosyl-L-methionine = 2-methyladenosine(2503) in 23S rRNA + 5'-deoxyadenosine + L-methionine + 2 oxidized [2Fe-2S]-[ferredoxin] + S-adenosyl-L-homocysteine. The catalysed reaction is adenosine(37) in tRNA + 2 reduced [2Fe-2S]-[ferredoxin] + 2 S-adenosyl-L-methionine = 2-methyladenosine(37) in tRNA + 5'-deoxyadenosine + L-methionine + 2 oxidized [2Fe-2S]-[ferredoxin] + S-adenosyl-L-homocysteine. Specifically methylates position 2 of adenine 2503 in 23S rRNA and position 2 of adenine 37 in tRNAs. The chain is Probable dual-specificity RNA methyltransferase RlmN from Bacillus anthracis (strain A0248).